A 79-amino-acid polypeptide reads, in one-letter code: MGGFTSIWHWVIVLLVIVLLFGAKKIPELAKGLGSGIKNFKKAVKDDEEEAKNEPKTLDAQATQTKVHESSEIKSKQES.

The helical transmembrane segment at Met1 to Phe21 threads the bilayer. A disordered region spans residues Glu48 to Ser79. Over residues Lys66–Ser79 the composition is skewed to basic and acidic residues.

This sequence belongs to the TatA/E family. The Tat system comprises two distinct complexes: a TatABC complex, containing multiple copies of TatA, TatB and TatC subunits, and a separate TatA complex, containing only TatA subunits. Substrates initially bind to the TatABC complex, which probably triggers association of the separate TatA complex to form the active translocon.

It is found in the cell inner membrane. In terms of biological role, part of the twin-arginine translocation (Tat) system that transports large folded proteins containing a characteristic twin-arginine motif in their signal peptide across membranes. TatA could form the protein-conducting channel of the Tat system. This Helicobacter pylori (strain ATCC 700392 / 26695) (Campylobacter pylori) protein is Sec-independent protein translocase protein TatA.